The chain runs to 223 residues: Glycolipid transfer protein 2 (223 aa).

Residues Asp-69, Asn-73, Trp-116, and His-155 each coordinate a ganglioside GM3 (d18:1(4E)).

The protein belongs to the GLTP family.

Its function is as follows. Transfers glycolipids in vitro. The polypeptide is Glycolipid transfer protein 2 (Arabidopsis thaliana (Mouse-ear cress)).